The following is a 141-amino-acid chain: Protein NrdI (141 aa).

Belongs to the NrdI family.

Its function is as follows. Probably involved in ribonucleotide reductase function. This chain is Protein NrdI, found in Wigglesworthia glossinidia brevipalpis.